A 235-amino-acid chain; its full sequence is (5-formylfuran-3-yl)methyl phosphate synthase (235 aa).

The active-site Schiff-base intermediate with substrate is Lys27. Residue Lys85 is the Proton acceptor of the active site.

It belongs to the MfnB family.

The enzyme catalyses 2 D-glyceraldehyde 3-phosphate = 4-(hydroxymethyl)-2-furancarboxaldehyde phosphate + phosphate + 2 H2O. It participates in cofactor biosynthesis; methanofuran biosynthesis. Catalyzes the formation of 4-(hydroxymethyl)-2-furancarboxaldehyde phosphate (4-HFC-P) from two molecules of glyceraldehyde-3-P (GA-3-P). The polypeptide is (5-formylfuran-3-yl)methyl phosphate synthase (Methanococcus aeolicus (strain ATCC BAA-1280 / DSM 17508 / OCM 812 / Nankai-3)).